A 371-amino-acid polypeptide reads, in one-letter code: Mannose-1-phosphate guanylyltransferase catalytic subunit beta (371 aa).

The interval 14 to 233 is substrate-binding domain; sequence RALILVGGYG…TGFWMDIGQP (220 aa). Residue Asp-122 coordinates GDP-alpha-D-mannose. Asp-122 contacts Mg(2+). Lys-173 is a catalytic residue. Residue Asp-229 participates in GDP-alpha-D-mannose binding. Residue Asp-229 coordinates Mg(2+). The segment at 256-371 is hexapeptide repeat domain; it reads YTGPGVVGNV…ASVPEPQIIM (116 aa).

Belongs to the transferase hexapeptide repeat family. In terms of assembly, component of the GMPPA-GMPPB mannose-1-phosphate guanylyltransferase complex composed of 4 Gmppa subunits and 8 Gmppb subunits; the complex is organized into three layers, a central layer made up of 2 Gmppa dimers sandwiched between two layers each made up of 2 Gmppb dimers. Gmppb catalytic activity is reduced when part of the complex and binding of GDP-alpha-D-Mannose by Gmppa induces allosteric feedback inhibition of Gmppb. Mg(2+) is required as a cofactor.

The catalysed reaction is alpha-D-mannose 1-phosphate + GTP + H(+) = GDP-alpha-D-mannose + diphosphate. Its pathway is nucleotide-sugar biosynthesis; GDP-alpha-D-mannose biosynthesis; GDP-alpha-D-mannose from alpha-D-mannose 1-phosphate (GTP route): step 1/1. Enzyme activity is reduced by incorporation into the GMPPA-GMPPB mannose-1-phosphate guanylyltransferase complex. Allosterically inhibited, when part of the GMPPA-GMPPB complex, by GDP-alpha-D-mannose binding to Gmppa. Catalytic subunit of the GMPPA-GMPPB mannose-1-phosphate guanylyltransferase complex. Catalyzes the formation of GDP-mannose, an essential precursor of glycan moieties of glycoproteins and glycolipids. Can catalyze the reverse reaction in vitro. Together with GMPPA regulates GDP-alpha-D-mannose levels. The polypeptide is Mannose-1-phosphate guanylyltransferase catalytic subunit beta (Drosophila pseudoobscura pseudoobscura (Fruit fly)).